Consider the following 366-residue polypeptide: Chorismate synthase (366 aa).

Arg-48 and Arg-54 together coordinate NADP(+). FMN-binding positions include 125-127, 238-239, Gly-278, 293-297, and Arg-319; these read RSS, NA, and KPTSS.

It belongs to the chorismate synthase family. As to quaternary structure, homotetramer. The cofactor is FMNH2.

The catalysed reaction is 5-O-(1-carboxyvinyl)-3-phosphoshikimate = chorismate + phosphate. It participates in metabolic intermediate biosynthesis; chorismate biosynthesis; chorismate from D-erythrose 4-phosphate and phosphoenolpyruvate: step 7/7. Catalyzes the anti-1,4-elimination of the C-3 phosphate and the C-6 proR hydrogen from 5-enolpyruvylshikimate-3-phosphate (EPSP) to yield chorismate, which is the branch point compound that serves as the starting substrate for the three terminal pathways of aromatic amino acid biosynthesis. This reaction introduces a second double bond into the aromatic ring system. The chain is Chorismate synthase from Neisseria gonorrhoeae (strain ATCC 700825 / FA 1090).